The sequence spans 447 residues: Chromosomal replication initiator protein DnaA (447 aa).

Residues 1-74 form a domain I, interacts with DnaA modulators region; that stretch reads MENIEELWSA…MLLEVTGSEL (74 aa). The segment at 74–108 is domain II; that stretch reads LNTKFIIPDSLEEIEEQKPMPKPKQSTDTGDSPKS. The interval 85–107 is disordered; sequence EEIEEQKPMPKPKQSTDTGDSPK. The segment covering 97 to 107 has biased composition (polar residues); sequence KQSTDTGDSPK. The domain III, AAA+ region stretch occupies residues 109–325; that stretch reads MLNSKYTFDT…GALIRVVAYS (217 aa). Residues Gly153, Gly155, Lys156, and Thr157 each contribute to the ATP site. Residues 326–447 are domain IV, binds dsDNA; sequence SLVNQDIDAS…EELKEKLKSI (122 aa).

It belongs to the DnaA family. In terms of assembly, oligomerizes as a right-handed, spiral filament on DNA at oriC.

It localises to the cytoplasm. Its function is as follows. Plays an essential role in the initiation and regulation of chromosomal replication. ATP-DnaA binds to the origin of replication (oriC) to initiate formation of the DNA replication initiation complex once per cell cycle. Binds the DnaA box (a 9 base pair repeat at the origin) and separates the double-stranded (ds)DNA. Forms a right-handed helical filament on oriC DNA; dsDNA binds to the exterior of the filament while single-stranded (ss)DNA is stabiized in the filament's interior. The ATP-DnaA-oriC complex binds and stabilizes one strand of the AT-rich DNA unwinding element (DUE), permitting loading of DNA polymerase. After initiation quickly degrades to an ADP-DnaA complex that is not apt for DNA replication. Binds acidic phospholipids. This chain is Chromosomal replication initiator protein DnaA, found in Oceanobacillus iheyensis (strain DSM 14371 / CIP 107618 / JCM 11309 / KCTC 3954 / HTE831).